The primary structure comprises 220 residues: Small ribosomal subunit protein eS1 (220 aa).

The protein belongs to the eukaryotic ribosomal protein eS1 family.

The protein is Small ribosomal subunit protein eS1 of Pyrobaculum arsenaticum (strain DSM 13514 / JCM 11321 / PZ6).